The sequence spans 301 residues: Recombination-associated protein RdgC (301 aa).

It belongs to the RdgC family.

Its subcellular location is the cytoplasm. The protein localises to the nucleoid. May be involved in recombination. The sequence is that of Recombination-associated protein RdgC from Xanthomonas oryzae pv. oryzae (strain MAFF 311018).